The primary structure comprises 315 residues: L-lactate dehydrogenase (315 aa).

NAD(+) is bound by residues Val17, Asp38, Lys43, Tyr69, and 83–84 (GA). Substrate-binding positions include Gln86, Arg92, and 124–127 (NPVD). NAD(+)-binding positions include 122–124 (ATN) and Ser147. Substrate is bound at residue 152 to 155 (DTAR). Beta-D-fructose 1,6-bisphosphate-binding residues include Arg157 and His172. The active-site Proton acceptor is the His179. A Phosphotyrosine modification is found at Tyr224. Thr233 provides a ligand contact to substrate.

It belongs to the LDH/MDH superfamily. LDH family. As to quaternary structure, homotetramer.

The protein resides in the cytoplasm. The catalysed reaction is (S)-lactate + NAD(+) = pyruvate + NADH + H(+). Its pathway is fermentation; pyruvate fermentation to lactate; (S)-lactate from pyruvate: step 1/1. Its activity is regulated as follows. Allosterically activated by fructose 1,6-bisphosphate (FBP). Catalyzes the conversion of lactate to pyruvate. The chain is L-lactate dehydrogenase from Bacillus pumilus (strain SAFR-032).